The chain runs to 607 residues: Large ribosomal subunit assembly factor BipA (607 aa).

Residues 3–198 (EKLRNIAIIA…AIVDHVPAPD (196 aa)) enclose the tr-type G domain. GTP contacts are provided by residues 15 to 20 (DHGKTT) and 128 to 131 (NKVD).

This sequence belongs to the TRAFAC class translation factor GTPase superfamily. Classic translation factor GTPase family. BipA subfamily. Monomer.

It localises to the cytoplasm. The enzyme catalyses GTP + H2O = GDP + phosphate + H(+). Its function is as follows. A 50S ribosomal subunit assembly protein with GTPase activity, required for 50S subunit assembly at low temperatures, may also play a role in translation. Binds GTP and analogs. Binds the 70S ribosome between the 30S and 50S subunits, in a similar position as ribosome-bound EF-G; it contacts a number of ribosomal proteins, both rRNAs and the A-site tRNA. This is Large ribosomal subunit assembly factor BipA from Shigella flexneri.